Reading from the N-terminus, the 391-residue chain is Putative F-box protein At1g47730 (391 aa).

The span at 1 to 12 (MEQREEKTENIQ) shows a compositional bias: basic and acidic residues. The interval 1-25 (MEQREEKTENIQRKRSRGKSSSSSL) is disordered. The 50-residue stretch at 19–68 (KSSSSSLPLDLTSEIFSRLPAKSVVRFRCVSKLWSSITTAPYFTNSFETR) folds into the F-box domain.

This chain is Putative F-box protein At1g47730, found in Arabidopsis thaliana (Mouse-ear cress).